The chain runs to 103 residues: c-Myc-binding protein (103 aa).

Belongs to the AMY1 family. As to quaternary structure, binds via its C-terminal region to the N-terminal region of MYC. Associates with AKAP1/S-AKAP84. Interacts with MYCBPAP. Interacts with CFAP91.

It localises to the cytoplasm. The protein localises to the nucleus. In terms of biological role, may control the transcriptional activity of MYC. Stimulates the activation of E box-dependent transcription by MYC. This chain is c-Myc-binding protein (Mycbp), found in Mus musculus (Mouse).